Consider the following 359-residue polypeptide: MFYHLLYPLHTAFAGFNVFRYITLRSIGAAVCAFLLVLFLGPLFIRTMQRLQIGQVVREDGPETHFKKKGVPTMGGLLILLSVTVSTLLWARLDNPLIWLVLLVTLFFGMIGAYDDYKKISKKTSEGLSAKGKLLLQIAGALIVGFFVYLHPGYDGQLSIPFMKNVQPDLGWFYIVFAVIVIVGASNAVNLTDGLDGLAAGPMVVSSAVYLLFAYLAGNVVLANYLHIPYVAGSGELAIFCGTLFGACLGFLWFNAHPAQMFMGDVGSLALGGALGSIAIIIKQEFLLAIVGGVFVMEALSVMLQVGYFRMSKGKRIFLMAPFHHHFEKKGWSEPKVVVRFWIVSIILGLFAIATLKLR.

A run of 10 helical transmembrane segments spans residues 27-47 (IGAA…FIRT), 71-91 (VPTM…LLWA), 93-113 (LDNP…MIGA), 134-154 (LLLQ…HPGY), 170-190 (LGWF…NAVN), 203-223 (MVVS…VVLA), 234-254 (SGEL…FLWF), 262-282 (FMGD…AIII), 286-306 (FLLA…MLQV), and 336-356 (KVVV…IATL).

This sequence belongs to the glycosyltransferase 4 family. MraY subfamily. The cofactor is Mg(2+).

Its subcellular location is the cell inner membrane. The enzyme catalyses UDP-N-acetyl-alpha-D-muramoyl-L-alanyl-gamma-D-glutamyl-meso-2,6-diaminopimeloyl-D-alanyl-D-alanine + di-trans,octa-cis-undecaprenyl phosphate = di-trans,octa-cis-undecaprenyl diphospho-N-acetyl-alpha-D-muramoyl-L-alanyl-D-glutamyl-meso-2,6-diaminopimeloyl-D-alanyl-D-alanine + UMP. Its pathway is cell wall biogenesis; peptidoglycan biosynthesis. Its function is as follows. Catalyzes the initial step of the lipid cycle reactions in the biosynthesis of the cell wall peptidoglycan: transfers peptidoglycan precursor phospho-MurNAc-pentapeptide from UDP-MurNAc-pentapeptide onto the lipid carrier undecaprenyl phosphate, yielding undecaprenyl-pyrophosphoryl-MurNAc-pentapeptide, known as lipid I. This Desulfotalea psychrophila (strain LSv54 / DSM 12343) protein is Phospho-N-acetylmuramoyl-pentapeptide-transferase.